A 181-amino-acid polypeptide reads, in one-letter code: Adenylate kinase (181 aa).

Gly10–Thr15 lines the ATP pocket. An NMP region spans residues Ser30 to Val59. AMP is bound by residues Thr31, Arg36, Asp57–Val59, Gly85–Arg88, and Gln92. The interval Ala126–Asp132 is LID. Arg127 provides a ligand contact to ATP. AMP-binding residues include Arg129 and Arg140. Gly166 serves as a coordination point for ATP.

The protein belongs to the adenylate kinase family. As to quaternary structure, monomer.

The protein localises to the cytoplasm. The catalysed reaction is AMP + ATP = 2 ADP. Its pathway is purine metabolism; AMP biosynthesis via salvage pathway; AMP from ADP: step 1/1. In terms of biological role, catalyzes the reversible transfer of the terminal phosphate group between ATP and AMP. Plays an important role in cellular energy homeostasis and in adenine nucleotide metabolism. The protein is Adenylate kinase of Nocardia farcinica (strain IFM 10152).